We begin with the raw amino-acid sequence, 164 residues long: Thiol peroxidase (164 aa).

The region spanning 18-163 is the Thioredoxin domain; sequence INEGDFAPDF…FDAALAAYKN (146 aa). Cys-60 functions as the Cysteine sulfenic acid (-SOH) intermediate in the catalytic mechanism. Cys-60 and Cys-93 are joined by a disulfide.

It belongs to the peroxiredoxin family. Tpx subfamily. As to quaternary structure, homodimer.

It catalyses the reaction a hydroperoxide + [thioredoxin]-dithiol = an alcohol + [thioredoxin]-disulfide + H2O. In terms of biological role, thiol-specific peroxidase that catalyzes the reduction of hydrogen peroxide and organic hydroperoxides to water and alcohols, respectively. Plays a role in cell protection against oxidative stress by detoxifying peroxides. This chain is Thiol peroxidase, found in Staphylococcus aureus (strain MRSA252).